Consider the following 139-residue polypeptide: ATP synthase epsilon chain (139 aa).

It belongs to the ATPase epsilon chain family. F-type ATPases have 2 components, CF(1) - the catalytic core - and CF(0) - the membrane proton channel. CF(1) has five subunits: alpha(3), beta(3), gamma(1), delta(1), epsilon(1). CF(0) has three main subunits: a, b and c.

It localises to the cell inner membrane. Produces ATP from ADP in the presence of a proton gradient across the membrane. This is ATP synthase epsilon chain from Pectobacterium carotovorum subsp. carotovorum (strain PC1).